A 117-amino-acid polypeptide reads, in one-letter code: Large ribosomal subunit protein uL18 (117 aa).

The protein belongs to the universal ribosomal protein uL18 family. Part of the 50S ribosomal subunit; part of the 5S rRNA/L5/L18/L25 subcomplex. Contacts the 5S and 23S rRNAs.

This is one of the proteins that bind and probably mediate the attachment of the 5S RNA into the large ribosomal subunit, where it forms part of the central protuberance. This is Large ribosomal subunit protein uL18 from Halorhodospira halophila (strain DSM 244 / SL1) (Ectothiorhodospira halophila (strain DSM 244 / SL1)).